The sequence spans 262 residues: ATP synthase subunit a 1 (262 aa).

5 consecutive transmembrane segments (helical) span residues 30–50 (TVHIDSLFFSVLTGLAFILVF), 91–111 (IAPLGLTIFCWIMLMNIMDLI), 131–151 (IVPTADVNITMAMALGVFALM), 201–221 (LFGNMFAGEVVFILIAALMPW), and 232–252 (AIFHILIITIQAFVFMMLTIV).

Belongs to the ATPase A chain family. In terms of assembly, F-type ATPases have 2 components, CF(1) - the catalytic core - and CF(0) - the membrane proton channel. CF(1) has five subunits: alpha(3), beta(3), gamma(1), delta(1), epsilon(1). CF(0) has three main subunits: a(1), b(2) and c(9-12). The alpha and beta chains form an alternating ring which encloses part of the gamma chain. CF(1) is attached to CF(0) by a central stalk formed by the gamma and epsilon chains, while a peripheral stalk is formed by the delta and b chains.

The protein resides in the cell inner membrane. Functionally, key component of the proton channel; it plays a direct role in the translocation of protons across the membrane. The polypeptide is ATP synthase subunit a 1 (Photobacterium profundum (strain SS9)).